The sequence spans 873 residues: Valine--tRNA ligase (873 aa).

The 'HIGH' region signature appears at 43 to 53; that stretch reads PNVTGVLHMGH. Positions 532–536 match the 'KMSKS' region motif; the sequence is KMSKS. Residue Lys-535 coordinates ATP. Positions 802 to 873 form a coiled coil; it reads LGNLINVEEE…IEESIAALTK (72 aa).

The protein belongs to the class-I aminoacyl-tRNA synthetase family. ValS type 1 subfamily. Monomer.

The protein localises to the cytoplasm. It carries out the reaction tRNA(Val) + L-valine + ATP = L-valyl-tRNA(Val) + AMP + diphosphate. In terms of biological role, catalyzes the attachment of valine to tRNA(Val). As ValRS can inadvertently accommodate and process structurally similar amino acids such as threonine, to avoid such errors, it has a 'posttransfer' editing activity that hydrolyzes mischarged Thr-tRNA(Val) in a tRNA-dependent manner. The protein is Valine--tRNA ligase of Parabacteroides distasonis (strain ATCC 8503 / DSM 20701 / CIP 104284 / JCM 5825 / NCTC 11152).